A 251-amino-acid polypeptide reads, in one-letter code: Hydroxyacylglutathione hydrolase (251 aa).

7 residues coordinate Zn(2+): H53, H55, D57, H58, H110, D127, and H165.

The protein belongs to the metallo-beta-lactamase superfamily. Glyoxalase II family. Monomer. Zn(2+) serves as cofactor.

The catalysed reaction is an S-(2-hydroxyacyl)glutathione + H2O = a 2-hydroxy carboxylate + glutathione + H(+). It participates in secondary metabolite metabolism; methylglyoxal degradation; (R)-lactate from methylglyoxal: step 2/2. Thiolesterase that catalyzes the hydrolysis of S-D-lactoyl-glutathione to form glutathione and D-lactic acid. The protein is Hydroxyacylglutathione hydrolase of Escherichia coli (strain UTI89 / UPEC).